Reading from the N-terminus, the 130-residue chain is Small ribosomal subunit protein uS9 (130 aa).

Residues 107-130 (DSRKVERKKPGLKKARKASQFSKR) are disordered. Positions 111–130 (VERKKPGLKKARKASQFSKR) are enriched in basic residues.

The protein belongs to the universal ribosomal protein uS9 family.

The chain is Small ribosomal subunit protein uS9 from Streptococcus sanguinis (strain SK36).